The sequence spans 248 residues: Mannose-binding protein C (248 aa).

Positions 1-20 (MSLIPSLSLLLMSMVAASYS) are cleaved as a signal peptide. The 58-residue stretch at 42-99 (GINGFPGKDGRDGTKGEKGEPGQGLRGLQGPPGKLGPPGNPGPSGSPGPKGQKGDPGK) folds into the Collagen-like domain. The tract at residues 43-107 (INGFPGKDGR…GKSPDCDSSL (65 aa)) is disordered. P47 carries the post-translational modification 4-hydroxyproline. Over residues 49–61 (KDGRDGTKGEKGE) the composition is skewed to basic and acidic residues. 4 positions are modified to 4-hydroxyproline: P73, P79, P82, and P88. The span at 75–87 (KLGPPGNPGPSGS) shows a compositional bias: pro residues. The span at 93–102 (QKGDPGKSPD) shows a compositional bias: basic and acidic residues. Positions 112-130 (RKALQTEMARIKKWLTFSL) form a coiled coil. One can recognise a C-type lectin domain in the interval 134–245 (VGNKFFLTNG…CSSSHLAVCE (112 aa)). 2 cysteine pairs are disulfide-bonded: C155/C244 and C222/C236.

Oligomeric complex of 3 or more homotrimers. Interacts with MASP1 and MASP2. Interacts with MEP1A and MEP1B and may inhibit their catalytic activity. In terms of processing, hydroxylation on proline residues within the sequence motif, GXPG, is most likely to be 4-hydroxy as this fits the requirement for 4-hydroxylation in vertebrates.

The protein localises to the secreted. Calcium-dependent lectin involved in innate immune defense. Binds mannose, fucose and N-acetylglucosamine on different microorganisms and activates the lectin complement pathway. Binds to late apoptotic cells, as well as to apoptotic blebs and to necrotic cells, but not to early apoptotic cells, facilitating their uptake by macrophages. The protein is Mannose-binding protein C (MBL2) of Hylobates lar (Lar gibbon).